We begin with the raw amino-acid sequence, 608 residues long: Albumin 2 (608 aa).

An N-terminal signal peptide occupies residues 1-14 (MQWLSVCSLLVLLS). Positions 15 to 18 (VLSR) are excised as a propeptide. Albumin domains lie at 19–205 (SQAQ…TFQH), 206–398 (AIAK…AGSD), and 402–600 (KITD…KLVS). 18 cysteine pairs are disulfide-bonded: C26–C72, C71–C80, C93–C108, C107–C118, C142–C187, C186–C195, C218–C264, C263–C271, C283–C299, C298–C309, C336–C381, C380–C389, C414–C460, C459–C471, C484–C500, C499–C510, C537–C582, and C581–C590. An N-linked (GlcNAc...) asparagine glycan is attached at N501.

This sequence belongs to the ALB/AFP/VDB family. Plasma.

It is found in the secreted. Functionally, binds water, Ca(2+), Na(+), K(+), fatty acids, hormones, bilirubin and drugs. Its main function is the regulation of the colloidal osmotic pressure of blood. The chain is Albumin 2 (alb2) from Salmo salar (Atlantic salmon).